The chain runs to 496 residues: 1-aminocyclopropane-1-carboxylate synthase 2 (496 aa).

Substrate is bound by residues glutamate 55 and tyrosine 93. Lysine 279 is modified (N6-(pyridoxal phosphate)lysine). A phosphoserine mark is found at serine 483, serine 488, and serine 491.

It belongs to the class-I pyridoxal-phosphate-dependent aminotransferase family. In terms of assembly, homodimer and heterodimer. In vivo, the relevance of heterodimerization with other ACS enzymes is however unsure. Interacts with GRF3. Pyridoxal 5'-phosphate serves as cofactor. In terms of processing, phosphorylated on serine residue by MAP kinase (MPK6). Post-translationally, may be processed at its C-terminus. As to expression, high in developing leaves and in flowers. Expressed in roots and siliques.

It catalyses the reaction S-adenosyl-L-methionine = 1-aminocyclopropane-1-carboxylate + S-methyl-5'-thioadenosine + H(+). The protein operates within alkene biosynthesis; ethylene biosynthesis via S-adenosyl-L-methionine; ethylene from S-adenosyl-L-methionine: step 1/2. Functionally, 1-aminocyclopropane-1-carboxylate synthase (ACS) enzymes catalyze the conversion of S-adenosyl-L-methionine (SAM) into 1-aminocyclopropane-1-carboxylate (ACC), a direct precursor of ethylene. The sequence is that of 1-aminocyclopropane-1-carboxylate synthase 2 (ACS2) from Arabidopsis thaliana (Mouse-ear cress).